A 510-amino-acid polypeptide reads, in one-letter code: Leucine-rich repeat protein lrrA (510 aa).

20 LRR repeats span residues 14–34 (YRKR…PPTI), 35–59 (GALQ…IGKL), 60–82 (SKVE…IGSL), 84–106 (TLKQ…NIGA), 107–130 (LKNL…ISNC), 132–152 (ALEY…EFGK), 153–176 (LYNL…ISGW), 177–200 (VKLE…CLLG), 202–222 (LSTL…LSSM), 224–245 (SLTN…LSNL), 246–270 (RQLK…LLSE), 272–292 (IELD…IATL), 293–315 (INLQ…VGNL), 316–340 (INLQ…IGKL), 341–363 (VNLK…IASM), 365–386 (ALKE…IGEL), 387–408 (SGLT…SFGN), 410–432 (SELQ…LDGL), 433–458 (KSCT…LIGL), and 460–478 (ILDV…IVMK).

The protein localises to the cytoplasm. Its function is as follows. Involved in cytoskeleton remodeling, which is needed for normal chemotactic aggregation and efficient cell sorting during multicellular morphogenesis. The sequence is that of Leucine-rich repeat protein lrrA (lrrA) from Dictyostelium discoideum (Social amoeba).